A 145-amino-acid polypeptide reads, in one-letter code: MPFDLLTVLFTRLDVEVNGFNGGVLNGVPSAYHWYTEQYGVKGPCGYEVNISSQGDNFIQVDFDTPWCQPESDVIAVLSRRFSCTLEHWYAEQGCNFCGWQRYERGELVDVLWGELEWSSPTDDDELPEVTAPEWIVDKVAHYGG.

This is an uncharacterized protein from Escherichia coli (strain K12).